The primary structure comprises 558 residues: Small ribosomal subunit protein bS1 (558 aa).

S1 motif domains follow at residues 21–87 (GSII…LSRE), 105–171 (SETV…VSRR), 192–260 (GMHV…LGLK), 277–347 (ETKL…LGLK), 364–434 (GVHV…LGIK), and 451–520 (GAII…LTIH).

This sequence belongs to the bacterial ribosomal protein bS1 family.

Functionally, binds mRNA; thus facilitating recognition of the initiation point. It is needed to translate mRNA with a short Shine-Dalgarno (SD) purine-rich sequence. In Buchnera aphidicola subsp. Acyrthosiphon pisum (strain APS) (Acyrthosiphon pisum symbiotic bacterium), this protein is Small ribosomal subunit protein bS1 (rpsA).